Consider the following 206-residue polypeptide: LysM and putative peptidoglycan-binding domain-containing protein 2 (206 aa).

Positions isoleucine 59–isoleucine 103 constitute a LysM domain. The interval alanine 184–histidine 206 is disordered. Residues arginine 186–glycine 197 are compositionally biased toward basic and acidic residues.

The chain is LysM and putative peptidoglycan-binding domain-containing protein 2 (lysmd2) from Xenopus laevis (African clawed frog).